The chain runs to 280 residues: 2-dehydro-3-deoxyphosphooctonate aldolase (280 aa).

The protein belongs to the KdsA family.

Its subcellular location is the cytoplasm. The enzyme catalyses D-arabinose 5-phosphate + phosphoenolpyruvate + H2O = 3-deoxy-alpha-D-manno-2-octulosonate-8-phosphate + phosphate. It functions in the pathway carbohydrate biosynthesis; 3-deoxy-D-manno-octulosonate biosynthesis; 3-deoxy-D-manno-octulosonate from D-ribulose 5-phosphate: step 2/3. Its pathway is bacterial outer membrane biogenesis; lipopolysaccharide biosynthesis. The protein is 2-dehydro-3-deoxyphosphooctonate aldolase of Neisseria meningitidis serogroup C / serotype 2a (strain ATCC 700532 / DSM 15464 / FAM18).